A 166-amino-acid polypeptide reads, in one-letter code: Minor capsid protein VP2 (166 aa).

A disordered region spans residues Pro138 to Val166. Residues Gln149 to Val166 are compositionally biased toward pro residues.

It belongs to the vesivirus VP2 protein family. Homooligomer. The portal-like structure consists in 12 copies of VP2. Interacts with capsid protein VP1.

The protein localises to the virion. It is found in the host cytoplasm. Its function is as follows. Minor structural protein that forms a portal-like structure at a unique three-fold axis of symmetry, following binding to the host receptor. The channel formed by VP2 may allow the delivery of the viral genome through the host endosomal membrane. In Homo sapiens (Human), this protein is Minor capsid protein VP2.